Consider the following 23-residue polypeptide: Testis ecdysiotropin peptide B (23 aa).

Its function is as follows. Stimulates synthesis of ecdysteroid in the testes of larvae and pupae. The polypeptide is Testis ecdysiotropin peptide B (Lymantria dispar (Gypsy moth)).